The sequence spans 484 residues: 6-phosphogluconate dehydrogenase, decarboxylating (484 aa).

Residues Gly11 to Gly16, Asn34 to Thr36, Val76 to Ala78, and Asn104 contribute to the NADP(+) site. Residues Asn104 and Ser130–Gly132 contribute to the substrate site. Catalysis depends on Lys185, which acts as the Proton acceptor. His188–Asn189 contributes to the substrate binding site. The active-site Proton donor is the Glu192. Residues Tyr193, Lys262, Arg289, Arg447, and His453 each contribute to the substrate site.

This sequence belongs to the 6-phosphogluconate dehydrogenase family. As to quaternary structure, homodimer.

The enzyme catalyses 6-phospho-D-gluconate + NADP(+) = D-ribulose 5-phosphate + CO2 + NADPH. Its pathway is carbohydrate degradation; pentose phosphate pathway; D-ribulose 5-phosphate from D-glucose 6-phosphate (oxidative stage): step 3/3. Its function is as follows. Catalyzes the oxidative decarboxylation of 6-phosphogluconate to ribulose 5-phosphate and CO(2), with concomitant reduction of NADP to NADPH. This is 6-phosphogluconate dehydrogenase, decarboxylating (gnd) from Haemophilus influenzae (strain ATCC 51907 / DSM 11121 / KW20 / Rd).